Here is a 235-residue protein sequence, read N- to C-terminus: Large ribosomal subunit protein uL1 (235 aa).

The protein belongs to the universal ribosomal protein uL1 family. In terms of assembly, part of the 50S ribosomal subunit.

In terms of biological role, binds directly to 23S rRNA. The L1 stalk is quite mobile in the ribosome, and is involved in E site tRNA release. Functionally, protein L1 is also a translational repressor protein, it controls the translation of the L11 operon by binding to its mRNA. This is Large ribosomal subunit protein uL1 from Prochlorococcus marinus (strain NATL1A).